Here is a 161-residue protein sequence, read N- to C-terminus: UPF0178 protein Rsph17025_3122 (161 aa).

Belongs to the UPF0178 family.

The polypeptide is UPF0178 protein Rsph17025_3122 (Cereibacter sphaeroides (strain ATCC 17025 / ATH 2.4.3) (Rhodobacter sphaeroides)).